Here is a 299-residue protein sequence, read N- to C-terminus: HTH-type transcriptional regulator CrgA (299 aa).

The region spanning 1-60 (MKTNSEELTVFVQVVESGSFSRAAEQLAMANSAVSRIVKRLEEKLGVNLLNRTTRQLSLT) is the HTH lysR-type domain. Residues 20 to 39 (FSRAAEQLAMANSAVSRIVK) constitute a DNA-binding region (H-T-H motif).

It belongs to the LysR transcriptional regulatory family. In terms of assembly, forms oligomers. Forms an octomeric ring-like structure in solution. May form hexadecamers when bound to target DNA.

With respect to regulation, activation and repression activities are enhanced by the addition of alpha-methylene-gamma-butyrolactone (MBL), an inducer of NADPH:quinone oxidoreductase. Regulatory protein that activates transcription of mdaB, encoding a NADPH:quinone oxidoreductase, and represses its own transcription. Under the same experimental conditions, no regulation of transcription of pilus and capsule genes is detected. This Neisseria meningitidis serogroup B (strain ATCC BAA-335 / MC58) protein is HTH-type transcriptional regulator CrgA.